We begin with the raw amino-acid sequence, 86 residues long: Toxin TdNa7 (86 aa).

The first 20 residues, 1–20 (MTRFVLFLSCFFLIGMVVEC), serve as a signal peptide directing secretion. One can recognise an LCN-type CS-alpha/beta domain in the interval 21–83 (KDGYLMGPDG…TWERATNTCG (63 aa)). Disulfide bonds link C31–C82, C35–C57, C43–C63, and C47–C65. Position 84 is a lysine amide (K84).

This sequence belongs to the long (4 C-C) scorpion toxin superfamily. Sodium channel inhibitor family. Beta subfamily. As to expression, expressed by the venom gland.

The protein localises to the secreted. Functionally, beta toxins bind voltage-independently at site-4 of sodium channels (Nav) and shift the voltage of activation toward more negative potentials thereby affecting sodium channel activation and promoting spontaneous and repetitive firing. This is Toxin TdNa7 from Tityus discrepans (Venezuelan scorpion).